The sequence spans 189 residues: Mediator of RNA polymerase II transcription subunit 30 (189 aa).

A coiled-coil region spans residues 138-178; that stretch reads SPESEDEIEKLEEQALSLRMEIAKKNVHVKELIDKLRELIA.

Belongs to the plant Mediator complex subunit 30 family. In terms of assembly, component of the Mediator complex.

Its subcellular location is the nucleus. Component of the Mediator complex, a coactivator involved in the regulated transcription of nearly all RNA polymerase II-dependent genes. Mediator functions as a bridge to convey information from gene-specific regulatory proteins to the basal RNA polymerase II transcription machinery. The Mediator complex, having a compact conformation in its free form, is recruited to promoters by direct interactions with regulatory proteins and serves for the assembly of a functional preinitiation complex with RNA polymerase II and the general transcription factors. The chain is Mediator of RNA polymerase II transcription subunit 30 (MED30) from Arabidopsis thaliana (Mouse-ear cress).